The sequence spans 59 residues: Small, acid-soluble spore protein H 1 (59 aa).

This sequence belongs to the SspH family.

It is found in the spore core. The chain is Small, acid-soluble spore protein H 1 (sspH1) from Bacillus anthracis.